Consider the following 279-residue polypeptide: Protein gustavus (279 aa).

Residues 36–233 (PARIDILLDM…ITMRYIGGLD (198 aa)) enclose the B30.2/SPRY domain. Residues 234-279 (PEPLPLMDLCRRTIRQKIGRTNLEEHIQQLQLPLSMKTYLLYKNRR) enclose the SOCS box domain. The tract at residues 236-279 (PLPLMDLCRRTIRQKIGRTNLEEHIQQLQLPLSMKTYLLYKNRR) is involved in binding to the Elongin BC complex.

The protein belongs to the SPSB family. Interacts (via B30.2/SPRY domain) with vas; this interaction may be necessary for the transport of vas to the posterior pole of the oocyte. Interacts with Cul-5. May associate with the Elongin BC complex composed of Elongin-B and Elongin-C. In terms of tissue distribution, expressed in ovaries, primarily in nurse cells and oocytes (at protein level).

The protein localises to the cytoplasm. The protein resides in the nucleus. Involved in the localization of vas to the posterior pole of the oocyte. Required maternally in the germ line for efficient primordial germ cell formation. This is Protein gustavus (gus) from Drosophila melanogaster (Fruit fly).